The following is a 68-amino-acid chain: UPF0352 protein CPS_2611 (68 aa).

This sequence belongs to the UPF0352 family.

The protein is UPF0352 protein CPS_2611 of Colwellia psychrerythraea (strain 34H / ATCC BAA-681) (Vibrio psychroerythus).